A 196-amino-acid chain; its full sequence is DnaA initiator-associating protein DiaA (196 aa).

In terms of domain architecture, SIS spans Leu-34–Asp-196.

It belongs to the SIS family. DiaA subfamily. As to quaternary structure, homotetramer; dimer of dimers.

Required for the timely initiation of chromosomal replication via direct interactions with the DnaA initiator protein. The sequence is that of DnaA initiator-associating protein DiaA from Enterobacter sp. (strain 638).